The sequence spans 384 residues: CDP-diacylglycerol--serine O-phosphatidyltransferase (384 aa).

This sequence belongs to the CDP-alcohol phosphatidyltransferase class-I family.

Its subcellular location is the membrane. It catalyses the reaction a CDP-1,2-diacyl-sn-glycerol + L-serine = a 1,2-diacyl-sn-glycero-3-phospho-L-serine + CMP + H(+). It functions in the pathway phospholipid metabolism; phosphatidylethanolamine biosynthesis; phosphatidylethanolamine from CDP-diacylglycerol: step 1/2. This Encephalitozoon cuniculi (strain GB-M1) (Microsporidian parasite) protein is CDP-diacylglycerol--serine O-phosphatidyltransferase (PSS).